The chain runs to 364 residues: Dual-specificity RNA methyltransferase RlmN (364 aa).

The active-site Proton acceptor is the Glu-91. The region spanning 97–333 (EDDRGTLCIS…TTTRKTRGDD (237 aa)) is the Radical SAM core domain. Cys-104 and Cys-338 are joined by a disulfide. The [4Fe-4S] cluster site is built by Cys-111, Cys-115, and Cys-118. S-adenosyl-L-methionine is bound by residues 164–165 (GE), Ser-196, 218–220 (SLH), and Asn-295. Cys-338 functions as the S-methylcysteine intermediate in the catalytic mechanism.

This sequence belongs to the radical SAM superfamily. RlmN family. [4Fe-4S] cluster serves as cofactor.

It localises to the cytoplasm. The enzyme catalyses adenosine(2503) in 23S rRNA + 2 reduced [2Fe-2S]-[ferredoxin] + 2 S-adenosyl-L-methionine = 2-methyladenosine(2503) in 23S rRNA + 5'-deoxyadenosine + L-methionine + 2 oxidized [2Fe-2S]-[ferredoxin] + S-adenosyl-L-homocysteine. The catalysed reaction is adenosine(37) in tRNA + 2 reduced [2Fe-2S]-[ferredoxin] + 2 S-adenosyl-L-methionine = 2-methyladenosine(37) in tRNA + 5'-deoxyadenosine + L-methionine + 2 oxidized [2Fe-2S]-[ferredoxin] + S-adenosyl-L-homocysteine. Specifically methylates position 2 of adenine 2503 in 23S rRNA and position 2 of adenine 37 in tRNAs. m2A2503 modification seems to play a crucial role in the proofreading step occurring at the peptidyl transferase center and thus would serve to optimize ribosomal fidelity. The chain is Dual-specificity RNA methyltransferase RlmN from Dechloromonas aromatica (strain RCB).